Here is a 102-residue protein sequence, read N- to C-terminus: Scorpine-like-2 (102 aa).

The signal sequence occupies residues 1–19 (MQTQCTVLQLLVLVALCSC). In terms of domain architecture, BetaSPN-type CS-alpha/beta spans 63-102 (QQLCLIVDTVQWCNKSCLAAENKEGYCHGTKCKCGIKVSY). Disulfide bonds link cysteine 66–cysteine 89, cysteine 75–cysteine 94, and cysteine 79–cysteine 96.

The protein belongs to the long chain scorpion toxin family. Class 3 subfamily. Expressed by the venom gland.

It localises to the secreted. In terms of biological role, inhibits voltage-gated potassium channels. The polypeptide is Scorpine-like-2 (Urodacus yaschenkoi (Inland robust scorpion)).